The following is a 406-amino-acid chain: CinA-like protein (406 aa).

Belongs to the CinA family.

The sequence is that of CinA-like protein from Pseudothermotoga lettingae (strain ATCC BAA-301 / DSM 14385 / NBRC 107922 / TMO) (Thermotoga lettingae).